Reading from the N-terminus, the 318-residue chain is Magnetosome protein MamM (318 aa).

The segment at 1 to 210 (MRKSGCAVCS…FMDAYRGLMD (210 aa)) is transmembrane domain (TMD). 4 helical membrane-spanning segments follow: residues 13 to 33 (IGWVGLAVSTVLMVMKAFVGL), 39 to 59 (AMLADAMYSLKDMLNALMVII), 81 to 101 (FILSMVVSVVFIVLTGYLLVH), and 117 to 137 (LIVLWAALVSIGVNVGMYFYS). Residues 211 to 318 (HTAGEAVQNR…DEVMLSKVDN (108 aa)) form a C-terminal domain (CTD) region. 4 residues coordinate Fe cation: Asp-249, His-264, His-285, and Glu-289.

It belongs to the cation diffusion facilitator (CDF) transporter (TC 2.A.4) family. In terms of assembly, forms homodimers via its C-terminal domain (CTD) in the presence of metal cations. Interacts with MamB via their CTD. Isolated CTD forms homodimers.

The protein localises to the magnetosome membrane. It is found in the cell inner membrane. Essential for magnetosome formation; required for stable accumulation of MamB. May nucleate iron crystal formation. Probably binds and transports iron. Binds divalent cations, possibly up to 3 Zn(2+) per dimer in vitro, probably iron in vivo. One of 7 genes (mamLQBIEMO) able to induce magnetosome membrane biogenesis; coexpression of mamLQRBIEMO in a deletion of the 17 gene mamAB operon restores magnetosome vesicle formation but not magnetite biosynthesis. This chain is Magnetosome protein MamM, found in Magnetospirillum gryphiswaldense (strain DSM 6361 / JCM 21280 / NBRC 15271 / MSR-1).